The primary structure comprises 334 residues: Glyceraldehyde-3-phosphate dehydrogenase (334 aa).

NAD(+) is bound by residues 10-11 (RI), Asp-33, Lys-77, and Thr-119. D-glyceraldehyde 3-phosphate-binding positions include 149–151 (SCT), Thr-180, 209–210 (TG), and Arg-232. Cys-150 serves as the catalytic Nucleophile. Asn-314 is a binding site for NAD(+).

The protein belongs to the glyceraldehyde-3-phosphate dehydrogenase family. As to quaternary structure, homotetramer.

It is found in the cytoplasm. It catalyses the reaction D-glyceraldehyde 3-phosphate + phosphate + NAD(+) = (2R)-3-phospho-glyceroyl phosphate + NADH + H(+). It participates in carbohydrate degradation; glycolysis; pyruvate from D-glyceraldehyde 3-phosphate: step 1/5. Catalyzes the oxidative phosphorylation of glyceraldehyde 3-phosphate (G3P) to 1,3-bisphosphoglycerate (BPG) using the cofactor NAD. The first reaction step involves the formation of a hemiacetal intermediate between G3P and a cysteine residue, and this hemiacetal intermediate is then oxidized to a thioester, with concomitant reduction of NAD to NADH. The reduced NADH is then exchanged with the second NAD, and the thioester is attacked by a nucleophilic inorganic phosphate to produce BPG. The polypeptide is Glyceraldehyde-3-phosphate dehydrogenase (gap) (Chlamydia trachomatis serovar D (strain ATCC VR-885 / DSM 19411 / UW-3/Cx)).